The chain runs to 907 residues: Aldehyde oxidoreductase (907 aa).

A 2Fe-2S ferredoxin-type domain is found at 2 to 79 (IQKVITVNGI…GAQITTIEGV (78 aa)). The [2Fe-2S] cluster site is built by Cys40, Cys45, Cys48, Cys60, Cys100, Cys103, Cys137, and Cys139. The Mo-molybdopterin cytosine dinucleotide site is built by His653 and Glu869.

The protein belongs to the xanthine dehydrogenase family. In terms of assembly, homodimer. Requires Mo-molybdopterin cytosine dinucleotide as cofactor. [2Fe-2S] cluster serves as cofactor.

It catalyses the reaction an aldehyde + A + H2O = a carboxylate + AH2 + H(+). The polypeptide is Aldehyde oxidoreductase (mop) (Megalodesulfovibrio gigas (Desulfovibrio gigas)).